Here is a 278-residue protein sequence, read N- to C-terminus: MNNILSEEVLNVTDFTTSRQLALWKREDLQSPQLDDVAEEVPVALVYNGISHVVMMASPKDLTHFAMGFSLSEGIIDSPREIYGMDVVPSCNGLEVQIDLSSRRFMGLKARRRALAGRTGCGVCGVEQLNDIGKPVQPLPFSQTFNLGNLDRALKHLNDFQPTGKLTGCTHAAAWVMPSGELAGGHEDVGRHVALDKLLGRRATEGEEWRQGAALVSSRASYEMVQKSAMCGVEILFAVSAATTLAVDVAERCNLTLVGFCKPGRATIYTHPQRLIAD.

Residue cysteine 121 is the Cysteine persulfide intermediate of the active site. Residue phenylalanine 260–arginine 265 coordinates Mo-bis(molybdopterin guanine dinucleotide).

This sequence belongs to the FdhD family.

The protein localises to the cytoplasm. Required for formate dehydrogenase (FDH) activity. Acts as a sulfur carrier protein that transfers sulfur from IscS to the molybdenum cofactor prior to its insertion into FDH. The polypeptide is Sulfur carrier protein FdhD (Salmonella schwarzengrund (strain CVM19633)).